A 480-amino-acid polypeptide reads, in one-letter code: MQHQVLGLGIAGLAAARLLRAQGYEVLVWDEQDSPLLRQRQAELNQEGIPVRLGQPFQLAEGVKQVVVSPGIAWDHPLLQAVRQQGIPVVGEAELAWIYLDHLPWVGITGTNGKSTTTALVAEMFKAAGLQGIPCGNIGLPLSQVALATLQGKLKPDWIVAELSSYQLEASSRLMSSTPGGPPRIGVWTTFTPDHLERHGTLERYASFKARLLDRAQWRVLNGEDPYLCRRRQDWEKTYWISLAAPQLCCDQDPTATLDLRENRLYIQGEMVAELEDFAERCPGQHNLQNLLLAAAAARLAGLPNVAIQKAIRSFAGMPHRLERVAQIQVGATPIRFVNDSKATNYEAGWVALNALSPPIILIAGGRAKQGDPGAWLRLIRAKVARVLLMGESAPVLAEALQGIHYTDVELVPTLDVAVERAFAAACSLSRQAQRLGKPAQPITVLLSPACASFDQYSSFEHRGNHFRACCQALQGSLEC.

Gly110–Thr116 is a binding site for ATP.

It belongs to the MurCDEF family.

It localises to the cytoplasm. It catalyses the reaction UDP-N-acetyl-alpha-D-muramoyl-L-alanine + D-glutamate + ATP = UDP-N-acetyl-alpha-D-muramoyl-L-alanyl-D-glutamate + ADP + phosphate + H(+). Its pathway is cell wall biogenesis; peptidoglycan biosynthesis. In terms of biological role, cell wall formation. Catalyzes the addition of glutamate to the nucleotide precursor UDP-N-acetylmuramoyl-L-alanine (UMA). This is UDP-N-acetylmuramoylalanine--D-glutamate ligase from Synechococcus sp. (strain JA-2-3B'a(2-13)) (Cyanobacteria bacterium Yellowstone B-Prime).